We begin with the raw amino-acid sequence, 98 residues long: Large ribosomal subunit protein uL23 (98 aa).

The protein belongs to the universal ribosomal protein uL23 family. As to quaternary structure, part of the 50S ribosomal subunit. Contacts protein L29, and trigger factor when it is bound to the ribosome.

Its function is as follows. One of the early assembly proteins it binds 23S rRNA. One of the proteins that surrounds the polypeptide exit tunnel on the outside of the ribosome. Forms the main docking site for trigger factor binding to the ribosome. This chain is Large ribosomal subunit protein uL23, found in Jannaschia sp. (strain CCS1).